The following is a 551-amino-acid chain: Interleukin-2 receptor subunit beta (551 aa).

A signal peptide spans 1-26 (MATLALSWCLPLLILLLPLATSSASA). Residues 27–240 (AVNGTSRFTC…TKPAALGKDT (214 aa)) are Extracellular-facing. 3 N-linked (GlcNAc...) asparagine glycosylation sites follow: Asn-29, Asn-43, and Asn-71. Cys-36 and Cys-46 are disulfide-bonded. Cysteines 74 and 86 form a disulfide. In terms of domain architecture, Fibronectin type-III spans 134 to 234 (APISLQVVHV…QPLAFRTKPA (101 aa)). Asn-149 carries N-linked (GlcNAc...) asparagine glycosylation. The short motif at 220-224 (WSPWS) is the WSXWS motif element. Residues 241-265 (IPWLGHLLVGLSGAFGFIILVYLLI) form a helical membrane-spanning segment. Residues 266–551 (NCRNTGPWLK…LQDQDPTHLV (286 aa)) lie on the Cytoplasmic side of the membrane. Residues 278–286 (LKCHTPDPS) carry the Box 1 motif motif. 3 disordered regions span residues 389–417 (EEEPDEGGADAPTGSSPQPLRPLSAEDDA), 430–484 (FSPS…DLVD), and 496–517 (AGEQVPDPGPREPFSFPWARPP).

The protein belongs to the type I cytokine receptor family. Type 4 subfamily. In terms of assembly, non-covalent dimer of an alpha and a beta subunit. IL2R exists in 3 different forms: a high affinity dimer, an intermediate affinity monomer (beta subunit), and a low affinity monomer (alpha subunit). The high and intermediate affinity forms also associate with a gamma subunit. Interacts with SHB upon interleukin stimulation.

The protein localises to the cell membrane. It localises to the cell surface. Receptor for interleukin-2. This beta subunit is involved in receptor mediated endocytosis and transduces the mitogenic signals of IL2. Probably in association with IL15RA, involved in the stimulation of neutrophil phagocytosis by IL15. The sequence is that of Interleukin-2 receptor subunit beta (IL2RB) from Macaca fascicularis (Crab-eating macaque).